A 69-amino-acid polypeptide reads, in one-letter code: M-poneratoxin-Dq4e (69 aa).

A signal peptide spans 1–25 (MKLSAFTLAFALILMMAIMYNMAEA). Residues 26–39 (AALADADADAEAIA) constitute a propeptide that is removed on maturation.

As to expression, expressed by the venom gland.

It localises to the secreted. Its function is as follows. May have antimicrobial properties, like most ant linear peptides. In addition, when tested in vitro on the parasite Trypanosoma cruzi (responsible of the Chagas disease), is able to moderately reduce the number of the three forms (epimastigote, trypomastigote and amastigote) by inducing cell death through necrosis. This Dinoponera quadriceps (South American ant) protein is M-poneratoxin-Dq4e.